A 641-amino-acid chain; its full sequence is Phosphomethylpyrimidine synthase (641 aa).

Residues Asn221, Met250, Tyr279, His315, 335 to 337 (SRG), 376 to 379 (DGLR), and Glu415 each bind substrate. Residue His419 coordinates Zn(2+). Position 442 (Tyr442) interacts with substrate. Residue His483 coordinates Zn(2+). Cys563, Cys566, and Cys571 together coordinate [4Fe-4S] cluster.

Belongs to the ThiC family. As to quaternary structure, homodimer. [4Fe-4S] cluster is required as a cofactor.

The catalysed reaction is 5-amino-1-(5-phospho-beta-D-ribosyl)imidazole + S-adenosyl-L-methionine = 4-amino-2-methyl-5-(phosphooxymethyl)pyrimidine + CO + 5'-deoxyadenosine + formate + L-methionine + 3 H(+). It functions in the pathway cofactor biosynthesis; thiamine diphosphate biosynthesis. Its function is as follows. Catalyzes the synthesis of the hydroxymethylpyrimidine phosphate (HMP-P) moiety of thiamine from aminoimidazole ribotide (AIR) in a radical S-adenosyl-L-methionine (SAM)-dependent reaction. This Rhodopseudomonas palustris (strain TIE-1) protein is Phosphomethylpyrimidine synthase.